We begin with the raw amino-acid sequence, 84 residues long: Transcriptional regulator WhiB1 (84 aa).

The 63-residue stretch at 8–70 (VCRDEDPELF…GGMSEDERRA (63 aa)) folds into the 4Fe-4S Wbl-type domain. [4Fe-4S] cluster is bound by residues C9, C37, C40, and C46.

The protein belongs to the WhiB family. Homodimer. [4Fe-4S] cluster is required as a cofactor. Post-translationally, the Fe-S cluster can be nitrosylated by nitric oxide (NO). Upon Fe-S cluster removal intramolecular disulfide bonds are formed.

The protein resides in the cytoplasm. In terms of biological role, acts as a transcriptional regulator. Probably redox-responsive. The apo- but not holo-form probably binds DNA. In Mycobacterium tuberculosis (strain CDC 1551 / Oshkosh), this protein is Transcriptional regulator WhiB1 (whiB1).